Here is a 699-residue protein sequence, read N- to C-terminus: Elongation factor G (699 aa).

In terms of domain architecture, tr-type G spans 8–283 (EHIRNIGICA…AVVYFLPSPI (276 aa)). Residues 17 to 24 (AHIDAGKT), 81 to 85 (DTPGH), and 135 to 138 (NKMD) contribute to the GTP site.

This sequence belongs to the TRAFAC class translation factor GTPase superfamily. Classic translation factor GTPase family. EF-G/EF-2 subfamily.

The protein resides in the cytoplasm. Catalyzes the GTP-dependent ribosomal translocation step during translation elongation. During this step, the ribosome changes from the pre-translocational (PRE) to the post-translocational (POST) state as the newly formed A-site-bound peptidyl-tRNA and P-site-bound deacylated tRNA move to the P and E sites, respectively. Catalyzes the coordinated movement of the two tRNA molecules, the mRNA and conformational changes in the ribosome. This chain is Elongation factor G, found in Rickettsia akari (strain Hartford).